Reading from the N-terminus, the 150-residue chain is Protein-export protein SecB (150 aa).

Belongs to the SecB family. As to quaternary structure, homotetramer, a dimer of dimers. One homotetramer interacts with 1 SecA dimer.

Its subcellular location is the cytoplasm. Functionally, one of the proteins required for the normal export of preproteins out of the cell cytoplasm. It is a molecular chaperone that binds to a subset of precursor proteins, maintaining them in a translocation-competent state. It also specifically binds to its receptor SecA. The protein is Protein-export protein SecB of Chromobacterium violaceum (strain ATCC 12472 / DSM 30191 / JCM 1249 / CCUG 213 / NBRC 12614 / NCIMB 9131 / NCTC 9757 / MK).